Here is a 389-residue protein sequence, read N- to C-terminus: MASNLPLQLPAGVSDLLPPEAAALRQLEQRLLNCFRSWGYQEVMTPTFEFATTFQAGSPAGEEGALYKFIDRQGRVLALRPEMTAPIARLVATSLRRRELPLRLGYSARVFRYEEPQAGRRREFHQAGVELIGAGGVAGDVEIIALAVESLAQAGLEDFRLGLGQVAVTKGVLQDLALPPEAVAGIKSALASKDLVALERIYDEYHLEGERRRRLELLATIHGGREALEEARACFGRTAAAASLAELSRVWEALGAAGLEKWLFIDLGILRDFDYYTGIVFEGYVPGLGAPVCGGGRYDGLLAQFGYPCPATGFALGLERLLLARGETAPASLAGGYLVAGRDLAALLKRARELRSKGTAVVLDGESRSRQEAAARAAARGLNLEWIGE.

The protein belongs to the class-II aminoacyl-tRNA synthetase family. HisZ subfamily. In terms of assembly, heteromultimer composed of HisG and HisZ subunits.

The protein resides in the cytoplasm. Its pathway is amino-acid biosynthesis; L-histidine biosynthesis; L-histidine from 5-phospho-alpha-D-ribose 1-diphosphate: step 1/9. Functionally, required for the first step of histidine biosynthesis. May allow the feedback regulation of ATP phosphoribosyltransferase activity by histidine. The polypeptide is ATP phosphoribosyltransferase regulatory subunit (Moorella thermoacetica (strain ATCC 39073 / JCM 9320)).